Reading from the N-terminus, the 467-residue chain is Cytochrome c-552 (467 aa).

The first 27 residues, 1-27 (MMKKMTGKSFALSALVAASFMAAGAMA), serve as a signal peptide directing secretion. Heme c is bound at residue His-87. Positions 115, 118, and 119 each coordinate heme. Residues Cys-153, Cys-156, His-157, Cys-195, Cys-198, and His-199 each coordinate heme c. Ca(2+)-binding residues include Glu-201, Tyr-202, Lys-250, and Gln-252. Tyr-202 contributes to the substrate binding site. His-253 provides a ligand contact to substrate. Positions 264, 271, 274, 275, 290, 303, 306, 307, and 382 each coordinate heme c.

It belongs to the cytochrome c-552 family. Ca(2+) is required as a cofactor. The cofactor is heme c.

The protein resides in the periplasm. The catalysed reaction is 6 Fe(III)-[cytochrome c] + NH4(+) + 2 H2O = 6 Fe(II)-[cytochrome c] + nitrite + 8 H(+). Its pathway is nitrogen metabolism; nitrate reduction (assimilation). In terms of biological role, catalyzes the reduction of nitrite to ammonia, consuming six electrons in the process. In Shewanella sp. (strain W3-18-1), this protein is Cytochrome c-552.